A 269-amino-acid chain; its full sequence is MNLMNPEFVMPDVQSTVDTRQMPIQRVGVRAVRHPLTVRTAEGETQATVGTWNLDVHLPADQKGTHMSRFVALLEESGGPLTADAFRAMLATMLEKLEAQAGRIEVSFPYFVNKTAPVSGVRSLLDYEVTLTGDVRDGLTRVFAKVLVPVTSLCPCSKKISQYGAHNQRSHVTIDAELAADVPVEDLIRIAEEEASCELWGLLKRPDEKFVTERAYENPKFVEDLVRDVARRLDADERIVAYVLEAENFESIHNHSAYALIERDKRRRA.

The protein belongs to the GTP cyclohydrolase IV family.

The enzyme catalyses GTP + H2O = 7,8-dihydroneopterin 3'-triphosphate + formate + H(+). It functions in the pathway cofactor biosynthesis; 7,8-dihydroneopterin triphosphate biosynthesis; 7,8-dihydroneopterin triphosphate from GTP: step 1/1. Converts GTP to 7,8-dihydroneopterin triphosphate. This chain is GTP cyclohydrolase FolE2, found in Burkholderia thailandensis (strain ATCC 700388 / DSM 13276 / CCUG 48851 / CIP 106301 / E264).